A 159-amino-acid chain; its full sequence is Ubiquitin-like protein ATG12 (159 aa).

The disordered stretch occupies residues 1-40 (MASPQPPFGGGSNSNSNTASPSNNLSPTASPLLEGRDSPN). Positions 13–27 (NSNSNTASPSNNLSP) are enriched in low complexity. Residue glycine 159 forms a Glycyl lysine isopeptide (Gly-Lys) (interchain with K-218 in ATG5) linkage.

The protein belongs to the ATG12 family. As to quaternary structure, forms a conjugate with ATG5. Forms a thioester bond with the 'Cys-116' of ATG10. Interacts with the ATG7 C-terminal 40 amino acids domain. The ATG12-ATG5 conjugate forms a complex with several units of ATG16. The ATG12-ATG5 conjugate also associates with ATG3.

It is found in the preautophagosomal structure membrane. Its subcellular location is the cytoplasm. Ubiquitin-like protein involved in cytoplasm to vacuole transport (Cvt), autophagy vesicles formation, mitophagy, and nucleophagy. Conjugation with ATG5 through a ubiquitin-like conjugating system involving also ATG7 as an E1-like activating enzyme and ATG10 as an E2-like conjugating enzyme, is essential for its function. The ATG12-ATG5 conjugate acts as an E3-like enzyme which is required for lipidation of ATG8 and ATG8 association to the vesicle membranes. ATG12-ATG5 rearranges the ATG3 catalytic center and enhances its E2 activity. Plays a role in sexual development and perithecia formation. In Sordaria macrospora (strain ATCC MYA-333 / DSM 997 / K(L3346) / K-hell), this protein is Ubiquitin-like protein ATG12.